Reading from the N-terminus, the 1028-residue chain is Beta-galactosidase (1028 aa).

Substrate is bound by residues N104 and D203. D203 serves as a coordination point for Na(+). Residues E418, H420, and E463 each coordinate Mg(2+). Substrate contacts are provided by residues E463 and 539–542 (EYAH). E463 functions as the Proton donor in the catalytic mechanism. The active-site Nucleophile is E539. Mg(2+) is bound at residue N599. Positions 603 and 606 each coordinate Na(+). N606 and W1003 together coordinate substrate.

This sequence belongs to the glycosyl hydrolase 2 family. In terms of assembly, homotetramer. Mg(2+) serves as cofactor. Requires Na(+) as cofactor.

It carries out the reaction Hydrolysis of terminal non-reducing beta-D-galactose residues in beta-D-galactosides.. The protein is Beta-galactosidase of Enterobacter cloacae.